We begin with the raw amino-acid sequence, 370 residues long: GDSL esterase/lipase At1g09390 (370 aa).

Residues 1–27 form the signal peptide; sequence MATLSLHSHSFLLVLLPFILILRQNLA. Ser-44 serves as the catalytic Nucleophile. N-linked (GlcNAc...) asparagine glycans are attached at residues Asn-90 and Asn-315. Catalysis depends on residues Asp-336 and His-339.

Belongs to the 'GDSL' lipolytic enzyme family.

It localises to the secreted. The chain is GDSL esterase/lipase At1g09390 from Arabidopsis thaliana (Mouse-ear cress).